The sequence spans 242 residues: ATP synthase subunit a (242 aa).

Helical transmembrane passes span 29–49, 84–104, 114–134, 140–160, 181–201, and 203–223; these read SSIYMLLASTLALTYFYLAFY, FIPLVFSLFIFILFCNLLGMT, IIVTFTLALLIFLTVTIVGFI, FLTLFLPQGTPVWLAPLMIVI, MAGHVLLKVIAGFTVSLMIYL, and FLPIPLIVILIGFEIFVAILQ.

The protein belongs to the ATPase A chain family. In terms of assembly, F-type ATPases have 2 components, CF(1) - the catalytic core - and CF(0) - the membrane proton channel. CF(1) has five subunits: alpha(3), beta(3), gamma(1), delta(1), epsilon(1). CF(0) has three main subunits: a(1), b(2) and c(9-12). The alpha and beta chains form an alternating ring which encloses part of the gamma chain. CF(1) is attached to CF(0) by a central stalk formed by the gamma and epsilon chains, while a peripheral stalk is formed by the delta and b chains.

The protein resides in the cell inner membrane. In terms of biological role, key component of the proton channel; it plays a direct role in the translocation of protons across the membrane. The polypeptide is ATP synthase subunit a (Rickettsia typhi (strain ATCC VR-144 / Wilmington)).